Here is a 348-residue protein sequence, read N- to C-terminus: GMP reductase (348 aa).

Residue Ala108 to Ala131 participates in NADP(+) binding. K(+) contacts are provided by Gly181 and Gly183. The Thioimidate intermediate role is filled by Cys186. Ile216–Val239 is a binding site for NADP(+).

This sequence belongs to the IMPDH/GMPR family. GuaC type 1 subfamily. As to quaternary structure, homotetramer.

It catalyses the reaction IMP + NH4(+) + NADP(+) = GMP + NADPH + 2 H(+). Functionally, catalyzes the irreversible NADPH-dependent deamination of GMP to IMP. It functions in the conversion of nucleobase, nucleoside and nucleotide derivatives of G to A nucleotides, and in maintaining the intracellular balance of A and G nucleotides. This Edwardsiella ictaluri (strain 93-146) protein is GMP reductase.